The sequence spans 77 residues: Large ribosomal subunit protein bL28 (77 aa).

Belongs to the bacterial ribosomal protein bL28 family.

The protein is Large ribosomal subunit protein bL28 of Ralstonia pickettii (strain 12J).